The primary structure comprises 397 residues: Ribosomal RNA large subunit methyltransferase I (397 aa).

In terms of domain architecture, PUA spans 2–81 (STTVYLQKDR…EQIDTEFFVR (80 aa)).

It belongs to the methyltransferase superfamily. RlmI family.

The protein resides in the cytoplasm. The enzyme catalyses cytidine(1962) in 23S rRNA + S-adenosyl-L-methionine = 5-methylcytidine(1962) in 23S rRNA + S-adenosyl-L-homocysteine + H(+). In terms of biological role, specifically methylates the cytosine at position 1962 (m5C1962) of 23S rRNA. This chain is Ribosomal RNA large subunit methyltransferase I, found in Tolumonas auensis (strain DSM 9187 / NBRC 110442 / TA 4).